We begin with the raw amino-acid sequence, 218 residues long: Putative glutamine transport system permease protein GlnP (218 aa).

An ABC transmembrane type-1 domain is found at 19 to 208 (TLVTLKYSVI…ILVMLISFIA (190 aa)). 4 consecutive transmembrane segments (helical) span residues 25 to 45 (YSVI…ICKV), 57 to 79 (FYTS…FASP), 86 to 108 (FSVF…SEVI), and 187 to 207 (FFPM…ISFI).

This sequence belongs to the binding-protein-dependent transport system permease family. HisMQ subfamily.

The protein localises to the cell inner membrane. Functionally, part of the binding-protein-dependent transport system for glutamine; probably responsible for the translocation of the substrate across the membrane. In Rickettsia felis (strain ATCC VR-1525 / URRWXCal2) (Rickettsia azadi), this protein is Putative glutamine transport system permease protein GlnP (glnP).